Here is a 109-residue protein sequence, read N- to C-terminus: Preprofallaxidin-8 (109 aa).

Residues 1-22 (MASLKKSLFLVLFLGLLSLSIC) form the signal peptide. The propeptide occupies 23-46 (EEQKRENEEDAEDENHEEESEEKR). The segment at 27–46 (RENEEDAEDENHEEESEEKR) is disordered. Over residues 30–42 (EEDAEDENHEEES) the composition is skewed to acidic residues. Leucine 62 bears the Leucine amide mark. Positions 66-70 (SEEKR) are excised as a propeptide. At methionine 75 the chain carries Methionine amide. Positions 79–83 (SEEKR) are excised as a propeptide. A Methionine amide modification is found at methionine 88. 2 propeptides span residues 92–96 (SEEKR) and alanine 108.

Belongs to the frog skin active peptide (FSAP) family. Brevinin subfamily. As to expression, expressed by the skin glands.

Its subcellular location is the secreted. Its function is as follows. Fallaxidin-2.1 shows no antibacterial activity against Gram-positive or Gram-negative bacteria. Does not inhibit the formation of NO by neuronal nitric oxide synthase. Has no effect on splenocyte proliferation or smooth muscle contraction. In terms of biological role, fallaxidin-3.2 shows antibacterial activity against the Gram-positive bacteria E.faecalis (MIC=100 uM) and L.lactis (MIC=500 uM). No antibacterial activity against the Gram-positive bacteria B.cereus, L.innocua, M.luteus, S.epidermidis, S.uberis and S.aureus, or the Gram-negative bacteria E.cloacae and E.coli. The protein is Preprofallaxidin-8 of Litoria fallax (Eastern dwarf tree frog).